A 192-amino-acid chain; its full sequence is dTTP/UTP pyrophosphatase (192 aa).

The Proton acceptor role is filled by D68.

This sequence belongs to the Maf family. YhdE subfamily. It depends on a divalent metal cation as a cofactor.

The protein resides in the cytoplasm. The catalysed reaction is dTTP + H2O = dTMP + diphosphate + H(+). It catalyses the reaction UTP + H2O = UMP + diphosphate + H(+). In terms of biological role, nucleoside triphosphate pyrophosphatase that hydrolyzes dTTP and UTP. May have a dual role in cell division arrest and in preventing the incorporation of modified nucleotides into cellular nucleic acids. This chain is dTTP/UTP pyrophosphatase, found in Cereibacter sphaeroides (strain ATCC 17023 / DSM 158 / JCM 6121 / CCUG 31486 / LMG 2827 / NBRC 12203 / NCIMB 8253 / ATH 2.4.1.) (Rhodobacter sphaeroides).